A 274-amino-acid polypeptide reads, in one-letter code: Diaminopimelate epimerase (274 aa).

Positions 11 and 60 each coordinate substrate. Cys69 acts as the Proton donor in catalysis. Substrate contacts are provided by residues 70 to 71 (GN), Asn191, and 209 to 210 (ER). Cys218 acts as the Proton acceptor in catalysis. Residue 219-220 (GS) coordinates substrate.

It belongs to the diaminopimelate epimerase family. Homodimer.

It is found in the cytoplasm. It catalyses the reaction (2S,6S)-2,6-diaminopimelate = meso-2,6-diaminopimelate. It participates in amino-acid biosynthesis; L-lysine biosynthesis via DAP pathway; DL-2,6-diaminopimelate from LL-2,6-diaminopimelate: step 1/1. Functionally, catalyzes the stereoinversion of LL-2,6-diaminopimelate (L,L-DAP) to meso-diaminopimelate (meso-DAP), a precursor of L-lysine and an essential component of the bacterial peptidoglycan. The sequence is that of Diaminopimelate epimerase from Caldanaerobacter subterraneus subsp. tengcongensis (strain DSM 15242 / JCM 11007 / NBRC 100824 / MB4) (Thermoanaerobacter tengcongensis).